We begin with the raw amino-acid sequence, 263 residues long: Hydroxyethylthiazole kinase (263 aa).

Substrate is bound at residue Met39. The ATP site is built by Lys115 and Thr160. Gly187 contributes to the substrate binding site.

It belongs to the Thz kinase family. Requires Mg(2+) as cofactor.

The enzyme catalyses 5-(2-hydroxyethyl)-4-methylthiazole + ATP = 4-methyl-5-(2-phosphooxyethyl)-thiazole + ADP + H(+). It functions in the pathway cofactor biosynthesis; thiamine diphosphate biosynthesis; 4-methyl-5-(2-phosphoethyl)-thiazole from 5-(2-hydroxyethyl)-4-methylthiazole: step 1/1. In terms of biological role, catalyzes the phosphorylation of the hydroxyl group of 4-methyl-5-beta-hydroxyethylthiazole (THZ). The sequence is that of Hydroxyethylthiazole kinase from Staphylococcus saprophyticus subsp. saprophyticus (strain ATCC 15305 / DSM 20229 / NCIMB 8711 / NCTC 7292 / S-41).